A 523-amino-acid polypeptide reads, in one-letter code: Sensory neuron membrane protein 1 (523 aa).

Residues Met1 to Ala11 lie on the Cytoplasmic side of the membrane. The helical transmembrane segment at Ile12–Leu32 threads the bilayer. Residues Lys33 to Val458 lie on the Extracellular side of the membrane. The N-linked (GlcNAc...) asparagine glycan is linked to Asn229. Disulfide bonds link Cys268-Cys333, Cys297-Cys352, and Cys335-Cys341. The N-linked (GlcNAc...) asparagine glycan is linked to Asn440. A helical transmembrane segment spans residues Gly459 to Phe479. Residues His480 to Ile523 are Cytoplasmic-facing.

This sequence belongs to the CD36 family.

It is found in the cell membrane. In terms of biological role, plays an olfactory role that is not restricted to pheromone sensitivity. In Helicoverpa assulta (Oriental tobacco budworm), this protein is Sensory neuron membrane protein 1.